The sequence spans 509 residues: MDELQRNQNKHRSWQQFFLYPLFFREDLYAIAHDHHLDRSGSSEPTEFLVSRFFSFLTVKRSIRRIRKQKNSISLLGNCDRNQFIECNKNFCSKSILEGLTVVLEVSFAMRSKHFIEGMDGWNSIRSIHCIFPLMEDKLPHSNYISDIRVPYSIHPEILVRIFRRWIRDTPSLHLLRSILHEWKNSFSRENLQKAIITQGENTRFSLFLWNSYVYECESFLVPLVKRFFNSQSLLYGSFPDRTHFDKKIKHIVIFPXRQISTKKIWLLKDSFIHYVRYGERSLIALKGTHLEVKKWRYHLLHFWQYYFHLWFQPYRIRSLELSKTYSSFLGYFLHVKMKPLVVRAKMLDNLFITDLITNELNPIAPIRSILFFLAKEKFCDISGWPISKLSWTSLSDDDILDRFDRIWINLFHYYSGSMNRDGLYHIKYILLLSCAKTLACKHKSTIRVVREQLGSELFTKSFSKEREFISSSFSKNRLQRERIWNSEISQINPLANFWQKMQNKQIEN.

The protein belongs to the intron maturase 2 family. MatK subfamily.

It localises to the plastid. It is found in the chloroplast. In terms of biological role, usually encoded in the trnK tRNA gene intron. Probably assists in splicing its own and other chloroplast group II introns. The polypeptide is Maturase K (Sequoia sempervirens (California redwood)).